We begin with the raw amino-acid sequence, 315 residues long: Lipoyl synthase (315 aa).

7 residues coordinate [4Fe-4S] cluster: cysteine 62, cysteine 67, cysteine 73, cysteine 88, cysteine 92, cysteine 95, and serine 302. The region spanning 73-291 (CFGHGTATFM…GELAKKLGFS (219 aa)) is the Radical SAM core domain.

This sequence belongs to the radical SAM superfamily. Lipoyl synthase family. [4Fe-4S] cluster serves as cofactor.

It is found in the cytoplasm. The catalysed reaction is [[Fe-S] cluster scaffold protein carrying a second [4Fe-4S](2+) cluster] + N(6)-octanoyl-L-lysyl-[protein] + 2 oxidized [2Fe-2S]-[ferredoxin] + 2 S-adenosyl-L-methionine + 4 H(+) = [[Fe-S] cluster scaffold protein] + N(6)-[(R)-dihydrolipoyl]-L-lysyl-[protein] + 4 Fe(3+) + 2 hydrogen sulfide + 2 5'-deoxyadenosine + 2 L-methionine + 2 reduced [2Fe-2S]-[ferredoxin]. Its pathway is protein modification; protein lipoylation via endogenous pathway; protein N(6)-(lipoyl)lysine from octanoyl-[acyl-carrier-protein]: step 2/2. Its function is as follows. Catalyzes the radical-mediated insertion of two sulfur atoms into the C-6 and C-8 positions of the octanoyl moiety bound to the lipoyl domains of lipoate-dependent enzymes, thereby converting the octanoylated domains into lipoylated derivatives. The sequence is that of Lipoyl synthase from Coxiella burnetii (strain Dugway 5J108-111).